The chain runs to 874 residues: S-layer protein (874 aa).

Residues M1–A30 form the signal peptide. SLH domains follow at residues G31–P93, S94–G151, and T152–D214.

The protein resides in the secreted. The protein localises to the cell wall. Its subcellular location is the S-layer. The S-layer is a paracrystalline mono-layered assembly of proteins which coat the surface of bacteria. This is S-layer protein from Bacillus licheniformis.